Consider the following 223-residue polypeptide: Cytotoxic T-lymphocyte protein 4 (223 aa).

Positions 1–35 (MACSGFQSHGAWLELTSRTWPCTALFSLLFIPVFS) are cleaved as a signal peptide. Residues 38-161 (MHVAQPAVVL…IDPEPCPDSD (124 aa)) are Extracellular-facing. The Ig-like V-type domain maps to 39–140 (HVAQPAVVLA…VELLYPPPYY (102 aa)). A homodimerization region spans residues 46–50 (VLANS). Intrachain disulfides connect C58-C129 and C85-C103. The N-linked (GlcNAc...) asparagine glycan is linked to N113. An important for interaction with CD80 and CD86 region spans residues 134–139 (LYPPPY). Residue N145 is glycosylated (N-linked (GlcNAc...) asparagine). Residues 150–155 (YVIDPE) are homodimerization. A helical transmembrane segment spans residues 162 to 182 (FLLWILAAVSSGLFFYSFLIT). The Cytoplasmic portion of the chain corresponds to 183-223 (AVSLSKMLKKRSPLTTGVYVKMPPTEPECEKQFQPYFIPIN). Y201 is modified (phosphotyrosine; by TXK and JAK2).

In terms of assembly, homodimer; disulfide-linked. Binds to CD80/B7-1 and CD86/B7.2. Interacts with ICOSLG. N-glycosylation is important for dimerization. In terms of processing, phosphorylation at Tyr-201 prevents binding to the AP-2 adapter complex, blocks endocytosis, and leads to retention of CTLA4 on the cell surface.

The protein resides in the cell membrane. Inhibitory receptor acting as a major negative regulator of T-cell responses. The affinity of CTLA4 for its natural B7 family ligands, CD80 and CD86, is considerably stronger than the affinity of their cognate stimulatory coreceptor CD28. The polypeptide is Cytotoxic T-lymphocyte protein 4 (CTLA4) (Sus scrofa (Pig)).